Consider the following 146-residue polypeptide: UPF0260 protein VF_1660 (146 aa).

The protein belongs to the UPF0260 family.

This is UPF0260 protein VF_1660 from Aliivibrio fischeri (strain ATCC 700601 / ES114) (Vibrio fischeri).